The chain runs to 236 residues: Uridylate kinase (236 aa).

8 to 11 (KLSG) provides a ligand contact to ATP. The tract at residues 16-21 (GEQGYG) is involved in allosteric activation by GTP. Positions 51 and 55 each coordinate ATP. Residues Asp70 and 131–138 (TGNPYFST) contribute to the UMP site. ATP-binding residues include Asn159, Tyr165, and Asp168.

It belongs to the UMP kinase family. In terms of assembly, homohexamer.

The protein localises to the cytoplasm. The catalysed reaction is UMP + ATP = UDP + ADP. It functions in the pathway pyrimidine metabolism; CTP biosynthesis via de novo pathway; UDP from UMP (UMPK route): step 1/1. Its activity is regulated as follows. Allosterically activated by GTP. Inhibited by UTP. Catalyzes the reversible phosphorylation of UMP to UDP. In Shouchella clausii (strain KSM-K16) (Alkalihalobacillus clausii), this protein is Uridylate kinase.